Here is a 71-residue protein sequence, read N- to C-terminus: Small ribosomal subunit protein bS21B (71 aa).

The protein belongs to the bacterial ribosomal protein bS21 family.

The chain is Small ribosomal subunit protein bS21B from Rhizobium johnstonii (strain DSM 114642 / LMG 32736 / 3841) (Rhizobium leguminosarum bv. viciae).